We begin with the raw amino-acid sequence, 427 residues long: Phosphoribosylamine--glycine ligase (427 aa).

Residues 109–313 form the ATP-grasp domain; sequence RNLMAEYKIE…LAEVVTGITE (205 aa). 136 to 191 is an ATP binding site; that stretch reads VRDHDGDLAVKPIGLTGGKGVRIMGEQVDRAGAIEYIREINGGVVLEERLTGEEFT. Positions 271, 283, and 285 each coordinate Mg(2+). 3 residues coordinate Mn(2+): Q271, E283, and N285.

Belongs to the GARS family. Mg(2+) serves as cofactor. The cofactor is Mn(2+).

The catalysed reaction is 5-phospho-beta-D-ribosylamine + glycine + ATP = N(1)-(5-phospho-beta-D-ribosyl)glycinamide + ADP + phosphate + H(+). The protein operates within purine metabolism; IMP biosynthesis via de novo pathway; N(1)-(5-phospho-D-ribosyl)glycinamide from 5-phospho-alpha-D-ribose 1-diphosphate: step 2/2. This is Phosphoribosylamine--glycine ligase from Methanoregula boonei (strain DSM 21154 / JCM 14090 / 6A8).